The primary structure comprises 510 residues: Probable gamma-aminobutyrate transaminase 3, mitochondrial (510 aa).

A mitochondrion-targeting transit peptide spans 1 to 41 (MICRSLLLLRSNAASKASNIVKHVAATGCLPKYSSEAPARY). Pyridoxal 5'-phosphate is bound at residue 166–167 (GS). Residue Tyr-199 participates in substrate binding. Asp-306 contacts pyridoxal 5'-phosphate. Residue Lys-335 coordinates substrate. Lys-335 carries the post-translational modification N6-(pyridoxal phosphate)lysine.

This sequence belongs to the class-III pyridoxal-phosphate-dependent aminotransferase family.

It is found in the mitochondrion. It catalyses the reaction 4-aminobutanoate + pyruvate = succinate semialdehyde + L-alanine. The catalysed reaction is 4-aminobutanoate + glyoxylate = succinate semialdehyde + glycine. Transaminase that degrades gamma-amino butyric acid (GABA). In Oryza sativa subsp. japonica (Rice), this protein is Probable gamma-aminobutyrate transaminase 3, mitochondrial.